The sequence spans 630 residues: Transferrin-binding protein B (630 aa).

The N-terminal stretch at 1 to 17 (MKSVPLITGGLSFLLSA) is a signal peptide. Residue cysteine 18 is the site of N-palmitoyl cysteine attachment. A lipid anchor (S-diacylglycerol cysteine) is attached at cysteine 18. Disordered stretches follow at residues 26–53 (DVDD…KSNL), 280–301 (VTPT…LEGG), and 591–613 (NNPT…SPNA). Positions 32 to 50 (NPSSSKPRYQDDTSSSRTK) are enriched in polar residues.

The protein belongs to the TbpB family.

Its subcellular location is the cell outer membrane. It localises to the cell surface. Haemophilus acquires iron by extracting it from serum transferrin (TF) in its human host. Acts as a transferrin receptor and is required for transferrin utilization. This Haemophilus influenzae (strain 86-028NP) protein is Transferrin-binding protein B.